Here is a 224-residue protein sequence, read N- to C-terminus: tRNA (guanine-N(7)-)-methyltransferase (224 aa).

The S-adenosyl-L-methionine site is built by Glu45, Glu70, Asp97, and Asp119. Residue Asp119 is part of the active site. Substrate-binding positions include Lys123, Asp155, and 199-202 (TEYE).

It belongs to the class I-like SAM-binding methyltransferase superfamily. TrmB family.

It catalyses the reaction guanosine(46) in tRNA + S-adenosyl-L-methionine = N(7)-methylguanosine(46) in tRNA + S-adenosyl-L-homocysteine. It functions in the pathway tRNA modification; N(7)-methylguanine-tRNA biosynthesis. Catalyzes the formation of N(7)-methylguanine at position 46 (m7G46) in tRNA. This Ureaplasma parvum serovar 3 (strain ATCC 27815 / 27 / NCTC 11736) protein is tRNA (guanine-N(7)-)-methyltransferase.